Consider the following 150-residue polypeptide: Large ribosomal subunit protein bL9 (150 aa).

It belongs to the bacterial ribosomal protein bL9 family.

Binds to the 23S rRNA. The sequence is that of Large ribosomal subunit protein bL9 from Delftia acidovorans (strain DSM 14801 / SPH-1).